The following is a 23-amino-acid chain: Phospholipase A2 crotoxin basic chain 3 (23 aa).

It depends on Ca(2+) as a cofactor. Contains 7 disulfide bonds. Expressed by the venom gland.

It localises to the secreted. The catalysed reaction is a 1,2-diacyl-sn-glycero-3-phosphocholine + H2O = a 1-acyl-sn-glycero-3-phosphocholine + a fatty acid + H(+). Functionally, snake venom phospholipase A2 (PLA2) that shows presynaptic neurotoxicity. PLA2 catalyzes the calcium-dependent hydrolysis of the 2-acyl groups in 3-sn-phosphoglycerides. This Crotalus durissus terrificus (South American rattlesnake) protein is Phospholipase A2 crotoxin basic chain 3.